Consider the following 803-residue polypeptide: Volume-regulated anion channel subunit LRRC8C (803 aa).

At 1–22 (MIPVTEFRQFSEQQPAFRVLKP) the chain is on the cytoplasmic side. Residues 23-43 (WWDVFTDYLSVAMLMIGVFGC) traverse the membrane as a helical segment. The Extracellular portion of the chain corresponds to 44 to 125 (TLQVMQDKII…YERALHWYAK (82 aa)). 2 disulfides stabilise this stretch: Cys-54–Cys-308 and Cys-115–Cys-293. N-linked (GlcNAc...) asparagine glycosylation is found at Asn-64 and Asn-70. A helical membrane pass occupies residues 126–146 (YFPYLVLIHTLVFMLCSNFWF). Residues 147–266 (KFPGSSSKIE…ILYAMYVRQT (120 aa)) are Cytoplasmic-facing. Residues 177-209 (EVSGEDSEEKDNRKNNMSRSNTTQSGPEGSLVN) are disordered. Over residues 191–209 (NNMSRSNTTQSGPEGSLVN) the composition is skewed to polar residues. 2 positions are modified to phosphoserine: Ser-212 and Ser-215. The chain crosses the membrane as a helical span at residues 267 to 287 (VLKVIKFLIIIAYNSALVSKV). Topologically, residues 288–320 (QFTVDCNVDIQDMTGYKNFSCNHTMAHLFSKLS) are extracellular. A helical membrane pass occupies residues 321-341 (FCYLCFVSIYGLTCLYTLYWL). Over 342 to 803 (FYRSLKEYSF…SDVREQMKTE (462 aa)) the chain is Cytoplasmic. 17 LRR repeats span residues 397–419 (ENKL…QKLQ), 420–443 (TNAH…VFEI), 446–465 (LQSL…TIAQ), 468–490 (NLQE…SFLK), 492–513 (NLKV…MYGL), 515–536 (NLEE…VTLE), 543–563 (SLKI…VVDV), 566–586 (HLQK…NNLK), 590–611 (NLTE…VFSL), 613–634 (SLQE…VSFQ), 638–659 (KLTV…IKKL), 661–682 (SLER…LFLC), 684–705 (KIRY…IGVL), 707–728 (SLQY…LYFC), 730–751 (KLKT…IGNL), 753–774 (FLSY…LGDC), and 776–799 (ALKR…VREQ).

It belongs to the LRRC8 family. In terms of assembly, heterohexamer; oligomerizes with other LRRC8 proteins (LRRC8A, LRRC8B, LRRC8D and/or LRRC8E) to form a heterohexamer. Homoheptamer; inactive, likely because it is not targeted to the plasma membrane in the absence of LRRC8A. In vivo, the subunit composition may depend primarily on expression levels, and heterooligomeric channels containing various proportions of the different LRRC8 proteins may coexist.

The protein localises to the cell membrane. Its subcellular location is the endoplasmic reticulum membrane. The catalysed reaction is chloride(in) = chloride(out). It catalyses the reaction iodide(out) = iodide(in). It carries out the reaction taurine(out) = taurine(in). The enzyme catalyses 2',3'-cGAMP(out) = 2',3'-cGAMP(in). Its function is as follows. Non-essential component of the volume-regulated anion channel (VRAC, also named VSOAC channel), an anion channel required to maintain a constant cell volume in response to extracellular or intracellular osmotic changes. The VRAC channel conducts iodide better than chloride and can also conduct organic osmolytes like taurine. Plays a redundant role in the efflux of amino acids, such as aspartate and glutamate, in response to osmotic stress. The VRAC channel also mediates transport of immunoreactive cyclic dinucleotide GMP-AMP (2'-3'-cGAMP), an immune messenger produced in response to DNA virus in the cytosol. Channel activity requires LRRC8A plus at least one other family member (LRRC8B, LRRC8C, LRRC8D or LRRC8E); channel characteristics depend on the precise subunit composition. In Bos taurus (Bovine), this protein is Volume-regulated anion channel subunit LRRC8C.